The primary structure comprises 442 residues: D-serine dehydratase 1 (442 aa).

An N6-(pyridoxal phosphate)lysine modification is found at K118.

This sequence belongs to the serine/threonine dehydratase family. DsdA subfamily. As to quaternary structure, monomer. Pyridoxal 5'-phosphate is required as a cofactor.

The enzyme catalyses D-serine = pyruvate + NH4(+). The chain is D-serine dehydratase 1 from Escherichia coli (strain UTI89 / UPEC).